A 189-amino-acid chain; its full sequence is Large ribosomal subunit protein bL9 (189 aa).

The protein belongs to the bacterial ribosomal protein bL9 family.

In terms of biological role, binds to the 23S rRNA. The protein is Large ribosomal subunit protein bL9 of Brucella anthropi (strain ATCC 49188 / DSM 6882 / CCUG 24695 / JCM 21032 / LMG 3331 / NBRC 15819 / NCTC 12168 / Alc 37) (Ochrobactrum anthropi).